The chain runs to 124 residues: Small ribosomal subunit protein uS12 (124 aa).

The tract at residues 1–32 (MPTISQLIRHGRQKQKKRTKSPALKSSPQRRG) is disordered. Residues 9–20 (RHGRQKQKKRTK) show a composition bias toward basic residues. Aspartate 89 carries the post-translational modification 3-methylthioaspartic acid.

It belongs to the universal ribosomal protein uS12 family. In terms of assembly, part of the 30S ribosomal subunit. Contacts proteins S8 and S17. May interact with IF1 in the 30S initiation complex.

Functionally, with S4 and S5 plays an important role in translational accuracy. In terms of biological role, interacts with and stabilizes bases of the 16S rRNA that are involved in tRNA selection in the A site and with the mRNA backbone. Located at the interface of the 30S and 50S subunits, it traverses the body of the 30S subunit contacting proteins on the other side and probably holding the rRNA structure together. The combined cluster of proteins S8, S12 and S17 appears to hold together the shoulder and platform of the 30S subunit. The sequence is that of Small ribosomal subunit protein uS12 from Leptospira borgpetersenii serovar Hardjo-bovis (strain JB197).